The chain runs to 163 residues: Transcription elongation factor GreB (163 aa).

This sequence belongs to the GreA/GreB family. GreB subfamily.

Functionally, necessary for efficient RNA polymerase transcription elongation past template-encoded arresting sites. The arresting sites in DNA have the property of trapping a certain fraction of elongating RNA polymerases that pass through, resulting in locked ternary complexes. Cleavage of the nascent transcript by cleavage factors such as GreA or GreB allows the resumption of elongation from the new 3'terminus. GreB releases sequences of up to 9 nucleotides in length. This Vibrio parahaemolyticus serotype O3:K6 (strain RIMD 2210633) protein is Transcription elongation factor GreB.